We begin with the raw amino-acid sequence, 344 residues long: Trace amine-associated receptor 8a (344 aa).

Topologically, residues 1 to 33 (MTSNFSQAPLQLCYENVNASCIKTPYSPGLRVL) are extracellular. Residues Asn-4 and Asn-18 are each glycosylated (N-linked (GlcNAc...) asparagine). Disulfide bonds link Cys-21/Cys-185 and Cys-96/Cys-189. The helical transmembrane segment at 34-54 (LYMVFGFGAVLAVCGNLLVVI) threads the bilayer. Topologically, residues 55–67 (SVLHFKQLHSPAN) are cytoplasmic. A helical membrane pass occupies residues 68-88 (FLIASLASADFLVGISVMPFS). At 89–102 (MVRSIESCWYFGDT) the chain is on the extracellular side. The chain crosses the membrane as a helical span at residues 103-127 (FCSLHSCCDAAFCYSSLFHLCFISV). The Cytoplasmic portion of the chain corresponds to 128 to 146 (DRYIAVTDPLVYPTKFTVS). Residues 147–167 (VSGICISISWILPLVYSSAVF) traverse the membrane as a helical segment. The Extracellular segment spans residues 168–196 (YTGISATGIENLVSALNCVGGCQIVVNQD). The chain crosses the membrane as a helical span at residues 197 to 217 (WVLIDFLLFLIPTLVMIILYS). At 218-260 (KIFLVAKQQAVKIETSISGSKGESSLESHKARVAKRERKAAKT) the chain is on the cytoplasmic side. Residues 261–281 (LGVTVVAFMVSWLPYTIDTLI) traverse the membrane as a helical segment. At 282 to 291 (DAFMGFITPA) the chain is on the extracellular side. The chain crosses the membrane as a helical span at residues 292-314 (YVYEICCWSAYYNSAMNPLIYAF). Residues 315–344 (FYPWFRKAIKLILSGEILKSHSSTMSLFSE) lie on the Cytoplasmic side of the membrane.

This sequence belongs to the G-protein coupled receptor 1 family.

It localises to the cell membrane. Olfactory receptor activated by trace amines. Trace amine compounds are enriched in animal body fluids and act on trace amine-associated receptors (TAARs) to elicit both intraspecific and interspecific innate behaviors. Ligand-binding causes a conformation change that triggers signaling via G(s)-class of G alpha proteins (GNAL or GNAS). This chain is Trace amine-associated receptor 8a, found in Rattus norvegicus (Rat).